We begin with the raw amino-acid sequence, 602 residues long: Glutamine--fructose-6-phosphate aminotransferase [isomerizing] (602 aa).

Cysteine 2 (nucleophile; for GATase activity) is an active-site residue. In terms of domain architecture, Glutamine amidotransferase type-2 spans 2–219; it reads CGIIGYIGDR…DGEYAILTKD (218 aa). SIS domains lie at 280–420 and 453–592; these read VAEE…VLGT and LAET…PDKP. Residue lysine 597 is the For Fru-6P isomerization activity of the active site.

Homodimer.

The protein resides in the cytoplasm. It carries out the reaction D-fructose 6-phosphate + L-glutamine = D-glucosamine 6-phosphate + L-glutamate. Functionally, catalyzes the first step in hexosamine metabolism, converting fructose-6P into glucosamine-6P using glutamine as a nitrogen source. The chain is Glutamine--fructose-6-phosphate aminotransferase [isomerizing] from Thermococcus kodakarensis (strain ATCC BAA-918 / JCM 12380 / KOD1) (Pyrococcus kodakaraensis (strain KOD1)).